The chain runs to 187 residues: Pyridoxal 5'-phosphate synthase subunit PdxT (187 aa).

An L-glutamine-binding site is contributed by 47–49; the sequence is GES. Cysteine 76 acts as the Nucleophile in catalysis. Residues arginine 102 and 128–129 each bind L-glutamine; that span reads IR. Active-site charge relay system residues include histidine 165 and glutamate 167.

This sequence belongs to the glutaminase PdxT/SNO family. As to quaternary structure, in the presence of PdxS, forms a dodecamer of heterodimers. Only shows activity in the heterodimer.

The catalysed reaction is aldehydo-D-ribose 5-phosphate + D-glyceraldehyde 3-phosphate + L-glutamine = pyridoxal 5'-phosphate + L-glutamate + phosphate + 3 H2O + H(+). It catalyses the reaction L-glutamine + H2O = L-glutamate + NH4(+). It functions in the pathway cofactor biosynthesis; pyridoxal 5'-phosphate biosynthesis. Catalyzes the hydrolysis of glutamine to glutamate and ammonia as part of the biosynthesis of pyridoxal 5'-phosphate. The resulting ammonia molecule is channeled to the active site of PdxS. This chain is Pyridoxal 5'-phosphate synthase subunit PdxT, found in Methanococcus maripaludis (strain DSM 14266 / JCM 13030 / NBRC 101832 / S2 / LL).